Reading from the N-terminus, the 393-residue chain is Phospho-N-acetylmuramoyl-pentapeptide-transferase (393 aa).

10 helical membrane-spanning segments follow: residues Arg29–Ile49, Thr75–Phe95, Phe101–Trp121, Tyr138–Glu158, Ser193–Gly213, Gly226–Thr246, Ala263–Phe283, Val290–Ile310, Val315–Val335, and Gln370–Leu390.

It belongs to the glycosyltransferase 4 family. MraY subfamily. Mg(2+) is required as a cofactor.

The protein resides in the cell inner membrane. It carries out the reaction UDP-N-acetyl-alpha-D-muramoyl-L-alanyl-gamma-D-glutamyl-meso-2,6-diaminopimeloyl-D-alanyl-D-alanine + di-trans,octa-cis-undecaprenyl phosphate = di-trans,octa-cis-undecaprenyl diphospho-N-acetyl-alpha-D-muramoyl-L-alanyl-D-glutamyl-meso-2,6-diaminopimeloyl-D-alanyl-D-alanine + UMP. It functions in the pathway cell wall biogenesis; peptidoglycan biosynthesis. Functionally, catalyzes the initial step of the lipid cycle reactions in the biosynthesis of the cell wall peptidoglycan: transfers peptidoglycan precursor phospho-MurNAc-pentapeptide from UDP-MurNAc-pentapeptide onto the lipid carrier undecaprenyl phosphate, yielding undecaprenyl-pyrophosphoryl-MurNAc-pentapeptide, known as lipid I. This chain is Phospho-N-acetylmuramoyl-pentapeptide-transferase, found in Methylibium petroleiphilum (strain ATCC BAA-1232 / LMG 22953 / PM1).